A 157-amino-acid chain; its full sequence is Small ribosomal subunit protein uS7 (157 aa).

The protein belongs to the universal ribosomal protein uS7 family. In terms of assembly, part of the 30S ribosomal subunit. Contacts proteins S9 and S11.

In terms of biological role, one of the primary rRNA binding proteins, it binds directly to 16S rRNA where it nucleates assembly of the head domain of the 30S subunit. Is located at the subunit interface close to the decoding center, probably blocks exit of the E-site tRNA. In Chloroflexus aurantiacus (strain ATCC 29366 / DSM 635 / J-10-fl), this protein is Small ribosomal subunit protein uS7.